The chain runs to 205 residues: Protein N-terminal glutamine amidohydrolase (205 aa).

Active-site residues include cysteine 28, histidine 81, and aspartate 97.

The protein belongs to the NTAQ1 family. As to quaternary structure, monomer.

The protein resides in the cytoplasm. The protein localises to the cytosol. It localises to the nucleus. The catalysed reaction is N-terminal L-glutaminyl-[protein] + H2O = N-terminal L-glutamyl-[protein] + NH4(+). Functionally, mediates the side-chain deamidation of N-terminal glutamine residues to glutamate, an important step in N-end rule pathway of protein degradation. Conversion of the resulting N-terminal glutamine to glutamate renders the protein susceptible to arginylation, polyubiquitination and degradation as specified by the N-end rule. Does not act on substrates with internal or C-terminal glutamine and does not act on non-glutamine residues in any position. Does not deaminate acetylated N-terminal glutamine. With the exception of proline, all tested second-position residues on substrate peptides do not greatly influence the activity. In contrast, a proline at position 2, virtually abolishes deamidation of N-terminal glutamine. The protein is Protein N-terminal glutamine amidohydrolase of Homo sapiens (Human).